Reading from the N-terminus, the 429-residue chain is Small ribosomal subunit protein bS1 (429 aa).

S1 motif domains follow at residues 55–128, 144–211, 231–299, and 316–385; these read GDVV…LSKK, GDTV…SRKA, GEVV…LSIK, and GSVL…LSMK. Residues 382–399 are compositionally biased toward basic and acidic residues; it reads LSMKALEEKPEREDRRGN. Positions 382–412 are disordered; the sequence is LSMKALEEKPEREDRRGNDGSASRADIAAYK.

The protein belongs to the bacterial ribosomal protein bS1 family.

Binds mRNA; thus facilitating recognition of the initiation point. It is needed to translate mRNA with a short Shine-Dalgarno (SD) purine-rich sequence. The sequence is that of Small ribosomal subunit protein bS1 (rps1) from Leuconostoc lactis.